The sequence spans 363 residues: Small ribosomal subunit biogenesis GTPase RsgA (363 aa).

One can recognise a CP-type G domain in the interval 112–268; that stretch reads HQQVIAANID…LIDTPGMREL (157 aa). Residues 157-160 and 210-218 contribute to the GTP site; these read TKAD and GSSGAGKST. Residues C291, C296, H298, and C304 each contribute to the Zn(2+) site. The tract at residues 340–363 is disordered; it reads RVAQNNRGKGSGKRPASVDRPGRR.

This sequence belongs to the TRAFAC class YlqF/YawG GTPase family. RsgA subfamily. In terms of assembly, monomer. Associates with 30S ribosomal subunit, binds 16S rRNA. It depends on Zn(2+) as a cofactor.

Its subcellular location is the cytoplasm. One of several proteins that assist in the late maturation steps of the functional core of the 30S ribosomal subunit. Helps release RbfA from mature subunits. May play a role in the assembly of ribosomal proteins into the subunit. Circularly permuted GTPase that catalyzes slow GTP hydrolysis, GTPase activity is stimulated by the 30S ribosomal subunit. This chain is Small ribosomal subunit biogenesis GTPase RsgA, found in Xanthomonas campestris pv. campestris (strain 8004).